We begin with the raw amino-acid sequence, 227 residues long: 7-cyano-7-deazaguanine synthase (227 aa).

8–18 (VSGGADSATVL) lines the ATP pocket. 4 residues coordinate Zn(2+): cysteine 192, cysteine 202, cysteine 205, and cysteine 208.

This sequence belongs to the QueC family. Zn(2+) serves as cofactor.

It carries out the reaction 7-carboxy-7-deazaguanine + NH4(+) + ATP = 7-cyano-7-deazaguanine + ADP + phosphate + H2O + H(+). It participates in purine metabolism; 7-cyano-7-deazaguanine biosynthesis. Its function is as follows. Catalyzes the ATP-dependent conversion of 7-carboxy-7-deazaguanine (CDG) to 7-cyano-7-deazaguanine (preQ(0)). This Rickettsia canadensis (strain McKiel) protein is 7-cyano-7-deazaguanine synthase.